The following is a 120-amino-acid chain: ADMGMNIAGGAYNFGYNTGDAGGHSRVESGSGSSVAGSYSYVDANGDRRTVQYTAGPGGYQASGDVGVDRRTAAAAAALAAMAPKAPIPAPAAAPAAPWYNPVPVAPAIMAHPGGYIAKW.

The Chitin-binding type R&amp;R domain maps to 9–87 (GGAYNFGYNT…ALAAMAPKAP (79 aa)).

Its function is as follows. Component of the rigid cuticle of the spider. This chain is Adult-specific rigid cuticular protein 11.9, found in Araneus diadematus (European garden spider).